A 78-amino-acid polypeptide reads, in one-letter code: MTIVYCLTKLSNPSSSLRSSSDVSGNQGVEIDFDSNSISWKKWYSGGGGSGGKWDGGGSGGKWNGGGGSGGGSWKKWN.

Residues 51–78 (GGKWDGGGSGGKWNGGGGSGGGSWKKWN) form a disordered region.

This is an uncharacterized protein from Dictyostelium discoideum (Social amoeba).